The following is a 248-amino-acid chain: Proteasome subunit alpha type-7 (248 aa).

S130 is a glycosylation site (O-linked (GlcNAc) serine). Y153 carries the phosphotyrosine modification. Residue K227 is modified to N6-acetyllysine.

Belongs to the peptidase T1A family. In terms of assembly, the 26S proteasome consists of a 20S proteasome core and two 19S regulatory subunits. The 20S proteasome core is a barrel-shaped complex made of 28 subunits that are arranged in four stacked rings. The two outer rings are each formed by seven alpha subunits, and the two inner rings are formed by seven beta subunits. The proteolytic activity is exerted by three beta-subunits PSMB5, PSMB6 and PSMB7. PSMA7 interacts directly with the PSMG1-PSMG2 heterodimer which promotes 20S proteasome assembly. Interacts with HIF1A. Interacts with RAB7A. Interacts with PRKN. Interacts with ABL1 and ABL2. Interacts with EMAP2. Interacts with MAVS.

Its subcellular location is the cytoplasm. It localises to the nucleus. Component of the 20S core proteasome complex involved in the proteolytic degradation of most intracellular proteins. This complex plays numerous essential roles within the cell by associating with different regulatory particles. Associated with two 19S regulatory particles, forms the 26S proteasome and thus participates in the ATP-dependent degradation of ubiquitinated proteins. The 26S proteasome plays a key role in the maintenance of protein homeostasis by removing misfolded or damaged proteins that could impair cellular functions, and by removing proteins whose functions are no longer required. Associated with the PA200 or PA28, the 20S proteasome mediates ubiquitin-independent protein degradation. This type of proteolysis is required in several pathways including spermatogenesis (20S-PA200 complex) or generation of a subset of MHC class I-presented antigenic peptides (20S-PA28 complex). Inhibits the transactivation function of HIF-1A under both normoxic and hypoxia-mimicking conditions. The interaction with EMAP2 increases the proteasome-mediated HIF-1A degradation under the hypoxic conditions. Plays a role in hepatitis C virus internal ribosome entry site-mediated translation. Mediates nuclear translocation of the androgen receptor (AR) and thereby enhances androgen-mediated transactivation. Promotes MAVS degradation and thereby negatively regulates MAVS-mediated innate immune response. This is Proteasome subunit alpha type-7 (PSMA7) from Bos taurus (Bovine).